A 400-amino-acid chain; its full sequence is Argininosuccinate synthase (400 aa).

Ala8–Ser16 contributes to the ATP binding site. Tyr85 lines the L-citrulline pocket. Residue Gly115 participates in ATP binding. L-aspartate is bound by residues Thr117, Asn121, and Asp122. Asn121 contacts L-citrulline. The L-citrulline site is built by Arg125, Ser173, Glu258, and Tyr270.

This sequence belongs to the argininosuccinate synthase family. Type 1 subfamily. In terms of assembly, homotetramer.

It localises to the cytoplasm. It catalyses the reaction L-citrulline + L-aspartate + ATP = 2-(N(omega)-L-arginino)succinate + AMP + diphosphate + H(+). Its pathway is amino-acid biosynthesis; L-arginine biosynthesis; L-arginine from L-ornithine and carbamoyl phosphate: step 2/3. The protein is Argininosuccinate synthase of Staphylococcus haemolyticus (strain JCSC1435).